A 303-amino-acid polypeptide reads, in one-letter code: Glutathione transport system permease protein GsiD (303 aa).

6 consecutive transmembrane segments (helical) span residues 40–60 (AMTA…ARWI), 105–125 (LAAG…LGLL), 144–164 (LFAF…GSGI), 165–185 (ANVI…LVRG), 222–242 (IVVF…SLSF), and 266–286 (VIAP…VLAF). Positions 101–290 (AQISLAAGVF…LTVLAFNLLG (190 aa)) constitute an ABC transmembrane type-1 domain.

This sequence belongs to the binding-protein-dependent transport system permease family. The complex is composed of two ATP-binding proteins (GsiA), two transmembrane proteins (GsiC and GsiD) and a solute-binding protein (GsiB).

Its subcellular location is the cell inner membrane. Part of the ABC transporter complex GsiABCD involved in glutathione import. Probably responsible for the translocation of the substrate across the membrane. This Shigella flexneri serotype 5b (strain 8401) protein is Glutathione transport system permease protein GsiD.